Consider the following 384-residue polypeptide: Homoserine O-succinyltransferase (384 aa).

The region spanning 51–361 is the AB hydrolase-1 domain; sequence NAILICHALS…ETSQGHDAFL (311 aa). Ser-157 serves as the catalytic Nucleophile. Residue Arg-227 coordinates substrate. Catalysis depends on residues Asp-324 and His-357. Asp-358 serves as a coordination point for substrate.

This sequence belongs to the AB hydrolase superfamily. MetX family. As to quaternary structure, homodimer.

The protein localises to the cytoplasm. It catalyses the reaction L-homoserine + succinyl-CoA = O-succinyl-L-homoserine + CoA. It functions in the pathway amino-acid biosynthesis; L-methionine biosynthesis via de novo pathway; O-succinyl-L-homoserine from L-homoserine: step 1/1. In terms of biological role, transfers a succinyl group from succinyl-CoA to L-homoserine, forming succinyl-L-homoserine. In Alkalilimnicola ehrlichii (strain ATCC BAA-1101 / DSM 17681 / MLHE-1), this protein is Homoserine O-succinyltransferase.